The sequence spans 187 residues: Cerebral dopamine neurotrophic factor (187 aa).

Positions 1–24 (MRCTSPAALVTFCAGLWISNHVLA) are cleaved as a signal peptide. 3 cysteine pairs are disulfide-bonded: cysteine 37/cysteine 124, cysteine 40/cysteine 113, and cysteine 71/cysteine 82.

It belongs to the ARMET family.

The protein resides in the secreted. Trophic factor for dopamine neurons. Prevents the 6-hydroxydopamine (6-OHDA)-induced degeneration of dopaminergic neurons. When administered after 6-OHDA-lesioning, restores the dopaminergic function and prevents the degeneration of dopaminergic neurons in substantia nigra. The chain is Cerebral dopamine neurotrophic factor (Cdnf) from Rattus norvegicus (Rat).